The following is a 399-amino-acid chain: Imidazolonepropionase (399 aa).

The Fe(3+) site is built by His-74 and His-76. Zn(2+)-binding residues include His-74 and His-76. 4-imidazolone-5-propanoate is bound by residues Arg-83, Tyr-146, and His-176. Residue Tyr-146 coordinates N-formimidoyl-L-glutamate. His-238 provides a ligand contact to Fe(3+). Position 238 (His-238) interacts with Zn(2+). 4-imidazolone-5-propanoate is bound at residue Gln-241. A Fe(3+)-binding site is contributed by Asp-312. Asp-312 is a Zn(2+) binding site. N-formimidoyl-L-glutamate is bound by residues Asn-314 and Gly-316. Ser-317 is a 4-imidazolone-5-propanoate binding site.

It belongs to the metallo-dependent hydrolases superfamily. HutI family. The cofactor is Zn(2+). Fe(3+) is required as a cofactor.

The protein resides in the cytoplasm. The enzyme catalyses 4-imidazolone-5-propanoate + H2O = N-formimidoyl-L-glutamate. Its pathway is amino-acid degradation; L-histidine degradation into L-glutamate; N-formimidoyl-L-glutamate from L-histidine: step 3/3. Functionally, catalyzes the hydrolytic cleavage of the carbon-nitrogen bond in imidazolone-5-propanoate to yield N-formimidoyl-L-glutamate. It is the third step in the universal histidine degradation pathway. The polypeptide is Imidazolonepropionase (Deinococcus deserti (strain DSM 17065 / CIP 109153 / LMG 22923 / VCD115)).